The primary structure comprises 130 residues: Large ribosomal subunit protein bL19 (130 aa).

It belongs to the bacterial ribosomal protein bL19 family.

This protein is located at the 30S-50S ribosomal subunit interface and may play a role in the structure and function of the aminoacyl-tRNA binding site. This Cupriavidus taiwanensis (strain DSM 17343 / BCRC 17206 / CCUG 44338 / CIP 107171 / LMG 19424 / R1) (Ralstonia taiwanensis (strain LMG 19424)) protein is Large ribosomal subunit protein bL19.